We begin with the raw amino-acid sequence, 501 residues long: Acetyl-coenzyme A carboxylase carboxyl transferase subunit beta, chloroplastic (501 aa).

The 271-residue stretch at 231–501 folds into the CoA carboxyltransferase N-terminal domain; sequence LWIECENCYG…LIQNEKESRS (271 aa). Zn(2+) is bound by residues C235, C238, C254, and C257. The C4-type zinc-finger motif lies at 235 to 257; it reads CENCYGLNYKKILKSKMNICEHC.

It belongs to the AccD/PCCB family. In terms of assembly, acetyl-CoA carboxylase is a heterohexamer composed of biotin carboxyl carrier protein, biotin carboxylase and 2 subunits each of ACCase subunit alpha and ACCase plastid-coded subunit beta (accD). Zn(2+) serves as cofactor.

It is found in the plastid. It localises to the chloroplast stroma. The catalysed reaction is N(6)-carboxybiotinyl-L-lysyl-[protein] + acetyl-CoA = N(6)-biotinyl-L-lysyl-[protein] + malonyl-CoA. Its pathway is lipid metabolism; malonyl-CoA biosynthesis; malonyl-CoA from acetyl-CoA: step 1/1. Its function is as follows. Component of the acetyl coenzyme A carboxylase (ACC) complex. Biotin carboxylase (BC) catalyzes the carboxylation of biotin on its carrier protein (BCCP) and then the CO(2) group is transferred by the transcarboxylase to acetyl-CoA to form malonyl-CoA. In Lotus japonicus (Lotus corniculatus var. japonicus), this protein is Acetyl-coenzyme A carboxylase carboxyl transferase subunit beta, chloroplastic.